A 108-amino-acid chain; its full sequence is Protein YcgL (108 aa).

The 85-residue stretch at Met-12–Leu-96 folds into the YcgL domain.

The polypeptide is Protein YcgL (Shigella dysenteriae serotype 1 (strain Sd197)).